Consider the following 279-residue polypeptide: Fatty acid elongase 2 (279 aa).

Helical transmembrane passes span 16–36, 61–81, 112–132, 138–158, 164–184, 196–216, and 242–262; these read LMLE…ALVW, AIIV…IVVV, FWIG…MFLL, PPFL…HTYC, MVLF…YFAM, FAPF…LVTT, and MGVI…LNSY. A HxxHH motif motif is present at residues 142–146; it reads HWYHH. The active-site Nucleophile is His-145.

The protein belongs to the ELO family.

Its subcellular location is the endoplasmic reticulum membrane. The catalysed reaction is an acyl-CoA + malonyl-CoA + H(+) = a 3-oxoacyl-CoA + CO2 + CoA. It participates in lipid metabolism; fatty acid biosynthesis. Its function is as follows. Involved in the synthesis of fatty acids. Elongates C10 fatty acids to C14. Required for the maintenance of the global lipidome profile in this parasite. The polypeptide is Fatty acid elongase 2 (Trypanosoma cruzi (strain CL Brener)).